The sequence spans 355 residues: 3-isopropylmalate dehydrogenase (355 aa).

The substrate site is built by R90, R100, R128, and D222. 3 residues coordinate Mg(2+): D222, D246, and D250. 280–292 lines the NAD(+) pocket; the sequence is GSAPDIAGKGIAN.

This sequence belongs to the isocitrate and isopropylmalate dehydrogenases family. LeuB type 1 subfamily. As to quaternary structure, homodimer. The cofactor is Mg(2+). Mn(2+) is required as a cofactor.

The protein localises to the cytoplasm. The enzyme catalyses (2R,3S)-3-isopropylmalate + NAD(+) = 4-methyl-2-oxopentanoate + CO2 + NADH. It participates in amino-acid biosynthesis; L-leucine biosynthesis; L-leucine from 3-methyl-2-oxobutanoate: step 3/4. In terms of biological role, catalyzes the oxidation of 3-carboxy-2-hydroxy-4-methylpentanoate (3-isopropylmalate) to 3-carboxy-4-methyl-2-oxopentanoate. The product decarboxylates to 4-methyl-2 oxopentanoate. This Burkholderia multivorans (strain ATCC 17616 / 249) protein is 3-isopropylmalate dehydrogenase.